We begin with the raw amino-acid sequence, 623 residues long: DNA-directed RNA polymerase subunit beta' (623 aa).

The Zn(2+) site is built by Cys-70, Cys-72, Cys-85, and Cys-88. The Mg(2+) site is built by Asp-466, Asp-468, and Asp-470.

The protein belongs to the RNA polymerase beta' chain family. RpoC1 subfamily. As to quaternary structure, in plastids the minimal PEP RNA polymerase catalytic core is composed of four subunits: alpha, beta, beta', and beta''. When a (nuclear-encoded) sigma factor is associated with the core the holoenzyme is formed, which can initiate transcription. Mg(2+) is required as a cofactor. It depends on Zn(2+) as a cofactor.

Its subcellular location is the plastid. It is found in the chloroplast. It catalyses the reaction RNA(n) + a ribonucleoside 5'-triphosphate = RNA(n+1) + diphosphate. Its function is as follows. DNA-dependent RNA polymerase catalyzes the transcription of DNA into RNA using the four ribonucleoside triphosphates as substrates. The protein is DNA-directed RNA polymerase subunit beta' of Guillardia theta (Cryptophyte).